Here is a 32-residue protein sequence, read N- to C-terminus: GILSSFKGVAKGVAKDLAGKLLETLKCKITGC.

Cys27 and Cys32 form a disulfide bridge.

As to expression, expressed by the skin glands.

It localises to the secreted. The protein localises to the target cell membrane. Functionally, antibacterial peptide with amphipathic alpha-helical structure. Active against E.coli ATCC 25726 (MIC=4-5 uM) and S.aureus ATCC 25923 (MIC=8-10 uM). Has a weak hemolytic activity on human erythrocytes (LC(50)=150-160 uM). This chain is Ranatuerin-2CSa, found in Rana cascadae (Cascades frog).